The chain runs to 187 residues: MILLIDNYDSFTWNLYQYFCELGADVLVKRNDALTLADIDALKPQKIVISPGPCTPDEAGISLDVIRHYAGRLPILGVCLGHQAMAQAFGGKVVRAAKVMHGKTSPITHNGEGVFRGLANPLTVTRYHSLVVEPDSLPACFDVTAWSETREIMGIRHRQWDLEGVQFHPESILSEQGHQLLANFLHR.

In terms of domain architecture, Glutamine amidotransferase type-1 spans 1 to 187 (MILLIDNYDS…HQLLANFLHR (187 aa)). Active-site residues include Cys-79, His-168, and Glu-170.

Monomer. Heterodimer consisting of two non-identical subunits: a glutamine amidotransferase subunit (PabA) and a aminodeoxychorismate synthase subunit (PabB).

It carries out the reaction chorismate + L-glutamine = 4-amino-4-deoxychorismate + L-glutamate. Its pathway is cofactor biosynthesis; tetrahydrofolate biosynthesis; 4-aminobenzoate from chorismate: step 1/2. With respect to regulation, inhibited by 6-diazo-5-oxo-L-norleucine (DON). The inhibition is competitive with glutamine, but uncompetitive with chorismate. Its function is as follows. Part of a heterodimeric complex that catalyzes the two-step biosynthesis of 4-amino-4-deoxychorismate (ADC), a precursor of p-aminobenzoate (PABA) and tetrahydrofolate. In the first step, a glutamine amidotransferase (PabA) generates ammonia as a substrate that, along with chorismate, is used in the second step, catalyzed by aminodeoxychorismate synthase (PabB) to produce ADC. PabA converts glutamine into glutamate only in the presence of stoichiometric amounts of PabB. The protein is Aminodeoxychorismate synthase component 2 of Escherichia coli (strain K12).